A 337-amino-acid polypeptide reads, in one-letter code: Phosphate acyltransferase (337 aa).

Belongs to the PlsX family. As to quaternary structure, homodimer. Probably interacts with PlsY.

It is found in the cytoplasm. The enzyme catalyses a fatty acyl-[ACP] + phosphate = an acyl phosphate + holo-[ACP]. The protein operates within lipid metabolism; phospholipid metabolism. In terms of biological role, catalyzes the reversible formation of acyl-phosphate (acyl-PO(4)) from acyl-[acyl-carrier-protein] (acyl-ACP). This enzyme utilizes acyl-ACP as fatty acyl donor, but not acyl-CoA. In Acidobacterium capsulatum (strain ATCC 51196 / DSM 11244 / BCRC 80197 / JCM 7670 / NBRC 15755 / NCIMB 13165 / 161), this protein is Phosphate acyltransferase.